The primary structure comprises 217 residues: Probable GTP-binding protein EngB (217 aa).

The 185-residue stretch at Gly-29–Ile-213 folds into the EngB-type G domain. GTP contacts are provided by residues Gly-37 to Ser-44, Gly-64 to Glu-68, Asp-91 to Gly-94, Thr-158 to Asp-161, and Thr-192 to Ser-194. Residues Ser-44 and Thr-66 each coordinate Mg(2+).

It belongs to the TRAFAC class TrmE-Era-EngA-EngB-Septin-like GTPase superfamily. EngB GTPase family. Mg(2+) is required as a cofactor.

In terms of biological role, necessary for normal cell division and for the maintenance of normal septation. The chain is Probable GTP-binding protein EngB from Rhizobium johnstonii (strain DSM 114642 / LMG 32736 / 3841) (Rhizobium leguminosarum bv. viciae).